The following is a 583-amino-acid chain: Extracellular serine/threonine protein kinase four-jointed (583 aa).

The Cytoplasmic portion of the chain corresponds to 1-78 (MYDIKRLEAG…RRRSLQRRAC (78 aa)). A helical; Signal-anchor for type II membrane protein membrane pass occupies residues 79–99 (LLSILAAFVFGMALGVVVPMF). Topologically, residues 100-583 (GLPRHQDSPP…LGQVQKCQGS (484 aa)) are extracellular. Positions 179-222 (RTASGRYRKGPERRLSKKMPERVQPQETSRSPTTSPTNPTSEHQ) are disordered. Residues 187–199 (KGPERRLSKKMPE) are compositionally biased toward basic and acidic residues. Residues 206–219 (TSRSPTTSPTNPTS) are compositionally biased toward low complexity. Asn-310 and Asn-379 each carry an N-linked (GlcNAc...) asparagine glycan. The disordered stretch occupies residues 384–421 (MQSERQAQSQPHGLLKRLGAASSPGSAHQSNAIEETGT). Asn-491 carries an N-linked (GlcNAc...) asparagine glycan.

It belongs to the FJX1/FJ family. Post-translationally, proteolytically cleaved to yield a secreted protein. In terms of tissue distribution, in the eye disk, expressed in a gradient ahead of the morphogenetic furrow, high at the equator and low at the poles of the eye. In the leg disk, expressed in concentric rings, possibly corresponding to segmental boundaries. In the wing disk, expression is localized in the wing pouch; low in peripheral regions and high towards the center.

Its subcellular location is the golgi apparatus membrane. It localises to the secreted. It catalyses the reaction L-seryl-[protein] + ATP = O-phospho-L-seryl-[protein] + ADP + H(+). The catalysed reaction is L-threonyl-[protein] + ATP = O-phospho-L-threonyl-[protein] + ADP + H(+). Golgi serine/threonine protein kinase required for intermediate growth in the proximal-distal axis. Phosphorylates specific residues within extracellular cadherin domains of Fat (ft) and Dachsous (ds) as they transit through the Golgi. Acts in ommatidial polarity determination as a secondary signal downstream of Notch, JAK/STAT and wingless. Also necessary for the initiation, up-regulation or maintenance of Notch ligand, Serrate (Ser) expression in legs, thereby participating in a feedback loop with N signaling. Sufficient for joint formation and growth in the leg. The chain is Extracellular serine/threonine protein kinase four-jointed from Drosophila melanogaster (Fruit fly).